Consider the following 273-residue polypeptide: 4-hydroxy-tetrahydrodipicolinate reductase (273 aa).

NAD(+) is bound at residue 12–17 (GAAGRM). Arg-39 is a binding site for NADP(+). NAD(+) is bound by residues 102–104 (GTT) and 126–129 (AANF). His-159 acts as the Proton donor/acceptor in catalysis. His-160 contacts (S)-2,3,4,5-tetrahydrodipicolinate. The active-site Proton donor is Lys-163. 169-170 (GT) lines the (S)-2,3,4,5-tetrahydrodipicolinate pocket.

It belongs to the DapB family. Homotetramer.

It is found in the cytoplasm. The enzyme catalyses (S)-2,3,4,5-tetrahydrodipicolinate + NAD(+) + H2O = (2S,4S)-4-hydroxy-2,3,4,5-tetrahydrodipicolinate + NADH + H(+). It catalyses the reaction (S)-2,3,4,5-tetrahydrodipicolinate + NADP(+) + H2O = (2S,4S)-4-hydroxy-2,3,4,5-tetrahydrodipicolinate + NADPH + H(+). It functions in the pathway amino-acid biosynthesis; L-lysine biosynthesis via DAP pathway; (S)-tetrahydrodipicolinate from L-aspartate: step 4/4. Its function is as follows. Catalyzes the conversion of 4-hydroxy-tetrahydrodipicolinate (HTPA) to tetrahydrodipicolinate. In Erwinia tasmaniensis (strain DSM 17950 / CFBP 7177 / CIP 109463 / NCPPB 4357 / Et1/99), this protein is 4-hydroxy-tetrahydrodipicolinate reductase.